The following is a 482-amino-acid chain: Tripartite motif-containing protein 10 (482 aa).

The segment at 16–61 adopts an RING-type zinc-finger fold; it reads CPICQGTLREPVTIDCGHNFCCVCLTRYLEIPCLDPGELPTCPLCK. The segment at 95-136 adopts a B box-type zinc-finger fold; it reads EEEDVCLEHREKVYYFCEDDEMQLCVVCREAWEHRHHTVRFL. Positions 100, 103, 122, and 128 each coordinate Zn(2+). A B30.2/SPRY domain is found at 293–482; it reads REMKTFLEKL…GRGSKFSLSS (190 aa).

It belongs to the TRIM/RBCC family. As to quaternary structure, interacts with IFNAR1; this interaction prevents association of IFNAR1 with TYK2.

The protein resides in the cytoplasm. Its function is as follows. E3 ligase that plays an essential role in the differentiation and survival of terminal erythroid cells. May directly bind to PTEN and promote its ubiquitination, resulting in its proteasomal degradation and activation of hypertrophic signaling. In addition, plays a role in immune response regulation by repressing the phosphorylation of STAT1 and STAT2 in the interferon/JAK/STAT signaling pathway independent of its E3 ligase activity. Mechanistically, interacts with the intracellular domain of IFNAR1 and thereby inhibits the association of TYK2 and IFNAR1. This is Tripartite motif-containing protein 10 (TRIM10) from Sus scrofa (Pig).